The following is a 382-amino-acid chain: Telomere-binding protein OPG082 (382 aa).

It belongs to the orthopoxvirus OPG082 family.

Its subcellular location is the virion. Binds to the hairpin form of the viral telomeric sequence. Might direct genome encapsidation into the virus particle. This chain is Telomere-binding protein OPG082 (OPG082), found in Variola virus (isolate Human/India/Ind3/1967) (VARV).